The primary structure comprises 260 residues: Small ribosomal subunit protein uS2 (260 aa).

The protein belongs to the universal ribosomal protein uS2 family.

The sequence is that of Small ribosomal subunit protein uS2 from Staphylococcus carnosus (strain TM300).